Reading from the N-terminus, the 187-residue chain is Probable carboxylesterase Culp7 (187 aa).

Residues Cys15 and Cys69 are joined by a disulfide bond. Catalysis depends on Ser80, which acts as the Nucleophile. The cysteines at positions 151 and 158 are disulfide-linked. The active site involves Asp155. His167 serves as the catalytic Proton donor/acceptor.

Belongs to the cutinase family.

The protein localises to the cytoplasm. It is found in the cell membrane. It localises to the secreted. The protein resides in the cell wall. In terms of biological role, may have a role in cell wall processes. Does not exhibit cutinase activity. The protein is Probable carboxylesterase Culp7 of Mycobacterium tuberculosis (strain ATCC 25618 / H37Rv).